A 119-amino-acid polypeptide reads, in one-letter code: Large ribosomal subunit protein bL20 (119 aa).

It belongs to the bacterial ribosomal protein bL20 family.

Binds directly to 23S ribosomal RNA and is necessary for the in vitro assembly process of the 50S ribosomal subunit. It is not involved in the protein synthesizing functions of that subunit. This is Large ribosomal subunit protein bL20 from Brevibacillus brevis (strain 47 / JCM 6285 / NBRC 100599).